The following is a 349-amino-acid chain: Phosphorylcholine phosphatase (349 aa).

Positions 1–22 (MTFAKGILAALALAAAVGQASA) are cleaved as a signal peptide. Asp-53 functions as the Nucleophile in the catalytic mechanism. Residues Asp-53 and Asp-55 each coordinate Mg(2+). Asp-55 functions as the Proton donor in the catalytic mechanism. Cys-109 and Cys-116 form a disulfide bridge. Residue Asp-284 participates in Mg(2+) binding.

It belongs to the HAD-like hydrolase superfamily. As to quaternary structure, monomer. Homodimer. Homotetramer. It depends on Mg(2+) as a cofactor.

It localises to the periplasm. It catalyses the reaction phosphocholine + H2O = choline + phosphate. The enzyme catalyses phosphoethanolamine + H2O = ethanolamine + phosphate. Its activity is regulated as follows. Activity is inhibited by high concentrations of phosphorylcholine, phosphorylethanolamine, choline or betaine. Displays different properties depending on the substrate utilized, the pH conditions as well as the presence or absence of metal ions. At pH 5, activity is inhibited by Al(3+) ions. At pH 7.4, the enzyme cannot catalyze the hydrolysis of pNPP, phosphorylethanolamine is a poor substrate in either the presence or absence of divalent cations, and activity measured with phosphorylcholine is independent of divalent cations or is not inhibited by Al(3+) ions. Mg(2+) produces identical activation at pH 5.0 and 7.4, but Zn(2+) is an activator at pH 5.0 and becomes an inhibitor at pH 7.4. This inhibition at pH 7.4 may be due to a transition from octahedral to tetrahedral coordination geometry, which is produced by hydrolysis of the Zn-hexacoordinated complex. Functionally, catalyzes the hydrolysis of phosphorylcholine (PCho) to produce choline and inorganic phosphate. Can also hydrolyze phosphorylethanolamine and the nonphysiological substrate p-nitrophenylphosphate (pNPP). Shows higher affinity and catalytic efficiency with phosphorylcholine as substrate. Its function is as follows. Is probably involved in virulence. The bacteria may break down various host compounds or host cell membranes through the coordinated action of phospholipase C and phosphocholine phosphatase. The final consequence of the action of these enzymes is an increase of the free choline concentration, which may promote the pathogenicity of P.aeruginosa. The polypeptide is Phosphorylcholine phosphatase (Pseudomonas aeruginosa (strain ATCC 15692 / DSM 22644 / CIP 104116 / JCM 14847 / LMG 12228 / 1C / PRS 101 / PAO1)).